A 379-amino-acid chain; its full sequence is uncharacterized protein (379 aa).

This sequence belongs to the herpesviridae US22 family.

This is an uncharacterized protein from Human cytomegalovirus (strain AD169) (HHV-5).